A 182-amino-acid chain; its full sequence is MVEEEVAKKYDSSFTAGKNTVQQIQAQVDTATQEESSQGPVLLNQHPETTSVPYTPETVGQQLMVSLPGEPHGTSAMPSMCPSLILQPCATTDPMLLQPQVMGPSASNQASVSATLEWQEMLEAAEALLALKNSSQTRHQPCGMPGTAGERGLQLANPSMPPRPTSSGSLPSGHLDCMSLLT.

Phosphoserine is present on Thr-15. Residues 26–39 show a composition bias toward polar residues; it reads AQVDTATQEESSQG. 2 disordered regions span residues 26-48 and 136-174; these read AQVD…QHPE and QTRH…PSGH.

Belongs to the DMRT family. Expressed in Sertoli cells in male testis.

This Mus musculus (Mouse) protein is Doublesex- and mab-3-related transcription factor C1 (Dmrtc1).